The sequence spans 119 residues: Small polypeptide DEVIL 24 (119 aa).

The segment at 83 to 114 (SFTSKCTSLMKQQHARLCIIRLCATMLLRSYT) is required for DVL/RTFL small polypeptide activity. Residues 96–113 (HARLCIIRLCATMLLRSY) traverse the membrane as a helical segment.

It belongs to the DVL/RTFL small polypeptides family.

The protein localises to the cell membrane. Functionally, small polypeptide acting as a regulatory molecule which coordinates cellular responses required for differentiation, growth and development, probably by restricting polar cell proliferation in lateral organs and coordinating socket cell recruitment and differentiation at trichome sites. The sequence is that of Small polypeptide DEVIL 24 from Arabidopsis thaliana (Mouse-ear cress).